Reading from the N-terminus, the 267-residue chain is Putative [LysW]-aminoadipate/[LysW]-glutamate kinase (267 aa).

Substrate-binding positions include 37–38, Arg64, and Asn169; that span reads GG.

It belongs to the acetylglutamate kinase family. LysZ subfamily.

The protein resides in the cytoplasm. The enzyme catalyses [amino-group carrier protein]-C-terminal-N-(1,4-dicarboxybutan-1-yl)-L-glutamine + ATP = [amino-group carrier protein]-C-terminal-N-(1-carboxy-5-phosphooxy-5-oxopentan-1-yl)-L-glutamine + ADP. The catalysed reaction is [amino-group carrier protein]-C-terminal-gamma-(L-glutamyl)-L-glutamate + ATP = [amino-group carrier protein]-C-terminal-gamma-(5-phospho-L-glutamyl)-L-glutamate + ADP. The protein operates within amino-acid biosynthesis; L-lysine biosynthesis via AAA pathway; L-lysine from L-alpha-aminoadipate (Thermus route): step 2/5. It participates in amino-acid biosynthesis; L-arginine biosynthesis. Functionally, involved in both the arginine and lysine biosynthetic pathways. Phosphorylates the LysW-bound precursors glutamate (for arginine biosynthesis), respectively alpha-aminoadipate (for lysine biosynthesis). In Nitrosopumilus maritimus (strain SCM1), this protein is Putative [LysW]-aminoadipate/[LysW]-glutamate kinase.